The chain runs to 394 residues: 3-ketosteroid-9-alpha-monooxygenase, oxygenase component (394 aa).

In terms of domain architecture, Rieske spans 27–129 (WHCLGLAKDF…TLDQDGLLFV (103 aa)). Positions 68, 70, 87, and 90 each coordinate [2Fe-2S] cluster. Residues Asn175, His181, and His186 each coordinate Fe cation. Residue Tyr245 coordinates substrate. A Fe cation-binding site is contributed by Asp305.

As to quaternary structure, homotrimer. The two-component system 3-ketosteroid-9-alpha-monooxygenase is composed of an oxygenase component KshA and a reductase component KshB. Requires [2Fe-2S] cluster as cofactor. It depends on Fe cation as a cofactor.

It carries out the reaction androsta-1,4-diene-3,17-dione + 2 reduced [2Fe-2S]-[ferredoxin] + O2 + 2 H(+) = 9alpha-hydroxyandrosta-1,4-diene-3,17-dione + 2 oxidized [2Fe-2S]-[ferredoxin] + H2O. May be involved in the degradation of cholic acid, a steroid acid found predominantly in the bile. In vitro, catalyzes the introduction of a 9alpha-hydroxyl moiety into the ring B of 3-ketosteroid substrates such as 1,4-androstadiene-3,17-dione (ADD), 4-androstene-3,17-dione (AD), 4-androstene-17beta-ol-3-one (testosterone), 4-pregnene-3,20-dione (progesterone), 3-oxo-23,24-bisnorcholesta-4-en-22-oate (4-BNC), 23,24-bisnorcholesta-4-ene-22-oate, 3-oxo-23,24-bisnorcholaesta-1,4-dien-22-oate (1,4-BNC), 23,24-bisnorcholesta-1,4-diene-22-oate and 3-oxo-23,24-bisnorcholesta-1,4-dien-22-oyl-coenzyme A thioester (1,4-BNC-CoA). KshA1 has the highest specificity for steroids possessing an isopropionyl side chain at C17. The chain is 3-ketosteroid-9-alpha-monooxygenase, oxygenase component from Rhodococcus rhodochrous.